The chain runs to 250 residues: Phosphonates import ATP-binding protein PhnC (250 aa).

The ABC transporter domain occupies 2–247; sequence IVFNNVNKVW…KLDAQAMKKI (246 aa). 35-42 provides a ligand contact to ATP; it reads GLSGAGKT.

The protein belongs to the ABC transporter superfamily. Phosphonates importer (TC 3.A.1.9.1) family. The complex is composed of two ATP-binding proteins (PhnC), two transmembrane proteins (PhnE) and a solute-binding protein (PhnD).

It is found in the cell membrane. It catalyses the reaction phosphonate(out) + ATP + H2O = phosphonate(in) + ADP + phosphate + H(+). In terms of biological role, part of the ABC transporter complex PhnCDE involved in phosphonates import. Responsible for energy coupling to the transport system. This is Phosphonates import ATP-binding protein PhnC from Mycoplasma mycoides subsp. mycoides SC (strain CCUG 32753 / NCTC 10114 / PG1).